Consider the following 135-residue polypeptide: Holo-[acyl-carrier-protein] synthase (135 aa).

The Mg(2+) site is built by Asp-8 and Glu-58.

The protein belongs to the P-Pant transferase superfamily. AcpS family. Mg(2+) serves as cofactor.

The protein resides in the cytoplasm. The enzyme catalyses apo-[ACP] + CoA = holo-[ACP] + adenosine 3',5'-bisphosphate + H(+). In terms of biological role, transfers the 4'-phosphopantetheine moiety from coenzyme A to a Ser of acyl-carrier-protein. The chain is Holo-[acyl-carrier-protein] synthase from Leuconostoc citreum (strain KM20).